Consider the following 263-residue polypeptide: ATP synthase subunit a (263 aa).

The next 5 helical transmembrane spans lie at 31 to 51 (LDTL…FYSI), 89 to 109 (IGSL…MDLI), 133 to 153 (DPNA…VYTF), 205 to 225 (LFGN…LPFW), and 235 to 255 (AIFH…LTIV).

It belongs to the ATPase A chain family. In terms of assembly, F-type ATPases have 2 components, CF(1) - the catalytic core - and CF(0) - the membrane proton channel. CF(1) has five subunits: alpha(3), beta(3), gamma(1), delta(1), epsilon(1). CF(0) has three main subunits: a(1), b(2) and c(9-12). The alpha and beta chains form an alternating ring which encloses part of the gamma chain. CF(1) is attached to CF(0) by a central stalk formed by the gamma and epsilon chains, while a peripheral stalk is formed by the delta and b chains.

Its subcellular location is the cell inner membrane. Key component of the proton channel; it plays a direct role in the translocation of protons across the membrane. The sequence is that of ATP synthase subunit a from Dichelobacter nodosus (strain VCS1703A).